A 696-amino-acid chain; its full sequence is Putative zinc metalloproteinase YIL108W (696 aa).

Lysine 245 participates in a covalent cross-link: Glycyl lysine isopeptide (Lys-Gly) (interchain with G-Cter in ubiquitin). Histidine 318 contributes to the Zn(2+) binding site. Residue glutamate 319 is part of the active site. Residues histidine 322 and histidine 328 each coordinate Zn(2+). At serine 361 the chain carries Phosphoserine. Glycyl lysine isopeptide (Lys-Gly) (interchain with G-Cter in ubiquitin) cross-links involve residues lysine 478, lysine 518, lysine 579, lysine 590, and lysine 596. The 174-residue stretch at glycine 522–alanine 695 folds into the Jacalin-type lectin domain.

The protein belongs to the peptidase M10B family. It depends on Zn(2+) as a cofactor.

It is found in the cytoplasm. The sequence is that of Putative zinc metalloproteinase YIL108W from Saccharomyces cerevisiae (strain ATCC 204508 / S288c) (Baker's yeast).